Here is a 662-residue protein sequence, read N- to C-terminus: UPF0313 protein CPE1196 (662 aa).

The Radical SAM core domain maps to 296–567 (AIEEVKFSLV…AMQRALLQFK (272 aa)). 3 residues coordinate [4Fe-4S] cluster: C310, C314, and C317. Residues 597 to 662 (RDKNSFGKGN…QRGSKGKKRR (66 aa)) are disordered. The span at 618–632 (NRNENSGRRESEDKK) shows a compositional bias: basic and acidic residues. The span at 633–644 (RSSHSKKQRGNK) shows a compositional bias: basic residues.

This sequence belongs to the UPF0313 family. Requires [4Fe-4S] cluster as cofactor.

The chain is UPF0313 protein CPE1196 from Clostridium perfringens (strain 13 / Type A).